The primary structure comprises 139 residues: Protein archease (139 aa).

3 residues coordinate Ca(2+): aspartate 12, aspartate 138, and isoleucine 139.

This sequence belongs to the archease family.

Functionally, activates the tRNA-splicing ligase complex by facilitating the enzymatic turnover of catalytic subunit RtcB. Acts by promoting the guanylylation of RtcB, a key intermediate step in tRNA ligation. Can also alter the NTP specificity of RtcB such that ATP, dGTP or ITP is used efficiently. The sequence is that of Protein archease from Saccharolobus islandicus (strain L.S.2.15 / Lassen #1) (Sulfolobus islandicus).